A 485-amino-acid chain; its full sequence is Peroxisomal catalase (485 aa).

Catalysis depends on residues His-53 and Asn-126. Tyr-336 is a binding site for heme.

The protein belongs to the catalase family. Homotetramer. Heme is required as a cofactor.

The protein resides in the peroxisome matrix. It carries out the reaction 2 H2O2 = O2 + 2 H2O. In terms of biological role, catalyzes the degradation of hydrogen peroxide (H(2)O(2)) generated by peroxisomal oxidases to water and oxygen, thereby protecting cells from the toxic effects of hydrogen peroxide. The protein is Peroxisomal catalase (POX9) of Candida tropicalis (Yeast).